The chain runs to 227 residues: Uracil-DNA glycosylase (227 aa).

Asp-65 (proton acceptor) is an active-site residue.

Belongs to the uracil-DNA glycosylase (UDG) superfamily. UNG family.

The protein resides in the cytoplasm. It catalyses the reaction Hydrolyzes single-stranded DNA or mismatched double-stranded DNA and polynucleotides, releasing free uracil.. Functionally, excises uracil residues from the DNA which can arise as a result of misincorporation of dUMP residues by DNA polymerase or due to deamination of cytosine. This Lactobacillus delbrueckii subsp. bulgaricus (strain ATCC BAA-365 / Lb-18) protein is Uracil-DNA glycosylase.